Reading from the N-terminus, the 254-residue chain is Probable protein S-acyltransferase 15 (254 aa).

2 helical membrane-spanning segments follow: residues 1–21 (MGFVYYVTLFVFIDDWVGLQS) and 28–48 (ALLFSLLASLCLFSLSICVLV). Residues 75–125 (RKCDKCFAYKPLRTHHCRVCRRCVLKMDHHCLWINNCVGYANYKAFFILVF) form the DHHC domain. Residue cysteine 105 is the S-palmitoyl cysteine intermediate of the active site. The next 2 helical transmembrane spans lie at 119–139 (AFFILVFYATVASIYSTVLLV) and 164–184 (IFMIGLSITLGTLLCWHIYLI).

This sequence belongs to the DHHC palmitoyltransferase family.

The protein resides in the endoplasmic reticulum membrane. It localises to the cytoplasmic vesicle membrane. The catalysed reaction is L-cysteinyl-[protein] + hexadecanoyl-CoA = S-hexadecanoyl-L-cysteinyl-[protein] + CoA. Functionally, palmitoyl acyltransferase. The polypeptide is Probable protein S-acyltransferase 15 (PAT15) (Arabidopsis thaliana (Mouse-ear cress)).